Consider the following 139-residue polypeptide: Actin-depolymerizing factor 4 (139 aa).

Residues 5–139 (SSGVAIHDDC…SLDALKDRVK (135 aa)) form the ADF-H domain.

This sequence belongs to the actin-binding proteins ADF family. Interacts with LECRK1 (via kinase domain).

The protein resides in the cytoplasm. Its subcellular location is the cytoskeleton. Actin-depolymerizing protein. Severs actin filaments (F-actin) and binds to actin monomers. Involved in innate immunity. Required for the expression of defense-related genes PR1A, LOX2 and CHS1 upon biotic stresses. Required for basal resistance to the fungal blast (Magnaporthe grisea), bacterial blight (Xanthomonas oryzae pv. oryzae, Xoo) and the herbivorous insect brown planthopper (Nilaparvata lugens, BPH). Involved in the promotion of seed germination. Required for the expression of alpha-amylase genes during seed germination. The chain is Actin-depolymerizing factor 4 (ADF4) from Oryza sativa subsp. japonica (Rice).